The sequence spans 180 residues: NAD(P)H-quinone oxidoreductase subunit 6, chloroplastic (180 aa).

Transmembrane regions (helical) follow at residues 10-30 (LLLA…VLLT), 32-52 (IIYS…FYII), 57-77 (FVAV…ILFA), 102-122 (IVCT…SWFG), and 153-173 (FLPF…AITI).

This sequence belongs to the complex I subunit 6 family. As to quaternary structure, NDH is composed of at least 16 different subunits, 5 of which are encoded in the nucleus.

Its subcellular location is the plastid. It is found in the chloroplast thylakoid membrane. It catalyses the reaction a plastoquinone + NADH + (n+1) H(+)(in) = a plastoquinol + NAD(+) + n H(+)(out). The catalysed reaction is a plastoquinone + NADPH + (n+1) H(+)(in) = a plastoquinol + NADP(+) + n H(+)(out). Functionally, NDH shuttles electrons from NAD(P)H:plastoquinone, via FMN and iron-sulfur (Fe-S) centers, to quinones in the photosynthetic chain and possibly in a chloroplast respiratory chain. The immediate electron acceptor for the enzyme in this species is believed to be plastoquinone. Couples the redox reaction to proton translocation, and thus conserves the redox energy in a proton gradient. This is NAD(P)H-quinone oxidoreductase subunit 6, chloroplastic (ndhG) from Cryptomeria japonica (Japanese cedar).